Consider the following 456-residue polypeptide: Pantothenate kinase 2, mitochondrial (456 aa).

The tract at residues 16–89 is disordered; the sequence is AGRFGAPMER…TSAGRPRAEG (74 aa). 2 stretches are compositionally biased toward low complexity: residues 28–39 and 55–65; these read RAAATSAAVGES and SSAAPSGSGEA. S55, S56, and S75 each carry phosphoserine. The short motif at 154-161 is the Nuclear export signal element; it reads LELKDLTL. Catalysis depends on E224, which acts as the Proton acceptor. Residues S278, S281, and R293 each contribute to the acetyl-CoA site.

The protein belongs to the type II pantothenate kinase family. As to quaternary structure, homodimer.

It localises to the cytoplasm. The protein localises to the cytosol. The catalysed reaction is (R)-pantothenate + ATP = (R)-4'-phosphopantothenate + ADP + H(+). It participates in cofactor biosynthesis; coenzyme A biosynthesis; CoA from (R)-pantothenate: step 1/5. With respect to regulation, inhibited by acetyl-CoA. Inhibited by calcium hopantenate. Activated by palmitoylcarnitine. In terms of biological role, catalyzes the phosphorylation of pantothenate to generate 4'-phosphopantothenate in the first and rate-determining step of coenzyme A (CoA) synthesis. This Mus musculus (Mouse) protein is Pantothenate kinase 2, mitochondrial (Pank2).